A 467-amino-acid chain; its full sequence is 3-isopropylmalate dehydratase large subunit (467 aa).

Positions 349, 409, and 412 each coordinate [4Fe-4S] cluster.

The protein belongs to the aconitase/IPM isomerase family. LeuC type 1 subfamily. Heterodimer of LeuC and LeuD. It depends on [4Fe-4S] cluster as a cofactor.

The enzyme catalyses (2R,3S)-3-isopropylmalate = (2S)-2-isopropylmalate. The protein operates within amino-acid biosynthesis; L-leucine biosynthesis; L-leucine from 3-methyl-2-oxobutanoate: step 2/4. Catalyzes the isomerization between 2-isopropylmalate and 3-isopropylmalate, via the formation of 2-isopropylmaleate. This is 3-isopropylmalate dehydratase large subunit from Vibrio cholerae serotype O1 (strain ATCC 39541 / Classical Ogawa 395 / O395).